We begin with the raw amino-acid sequence, 83 residues long: Kunitz-type serine protease inhibitor vestiginin-2 (83 aa).

Residues 1 to 24 form the signal peptide; sequence MSSGGLLLLLGLLTLWAELTPVSS. Residues 31 to 81 enclose the BPTI/Kunitz inhibitor domain; the sequence is CELPPDRGTCMGYSQAFYYNPSQNKCLPFMFGGCKANPNNFKTLEECKRTC. 3 disulfides stabilise this stretch: C31–C81, C40–C64, and C56–C77.

This sequence belongs to the venom Kunitz-type family. In terms of tissue distribution, expressed by the venom gland.

It is found in the secreted. In terms of biological role, serine protease inhibitor. In Demansia vestigiata (Lesser black whip snake), this protein is Kunitz-type serine protease inhibitor vestiginin-2.